Here is a 274-residue protein sequence, read N- to C-terminus: 4-hydroxy-tetrahydrodipicolinate reductase (274 aa).

Residues 11–16 (GGSGRM) and Glu37 contribute to the NAD(+) site. Arg38 lines the NADP(+) pocket. NAD(+)-binding positions include 101-103 (GTT) and 125-128 (APNM). His158 acts as the Proton donor/acceptor in catalysis. His159 lines the (S)-2,3,4,5-tetrahydrodipicolinate pocket. The active-site Proton donor is Lys162. 168–169 (GT) provides a ligand contact to (S)-2,3,4,5-tetrahydrodipicolinate.

Belongs to the DapB family.

It is found in the cytoplasm. The catalysed reaction is (S)-2,3,4,5-tetrahydrodipicolinate + NAD(+) + H2O = (2S,4S)-4-hydroxy-2,3,4,5-tetrahydrodipicolinate + NADH + H(+). It catalyses the reaction (S)-2,3,4,5-tetrahydrodipicolinate + NADP(+) + H2O = (2S,4S)-4-hydroxy-2,3,4,5-tetrahydrodipicolinate + NADPH + H(+). Its pathway is amino-acid biosynthesis; L-lysine biosynthesis via DAP pathway; (S)-tetrahydrodipicolinate from L-aspartate: step 4/4. In terms of biological role, catalyzes the conversion of 4-hydroxy-tetrahydrodipicolinate (HTPA) to tetrahydrodipicolinate. The sequence is that of 4-hydroxy-tetrahydrodipicolinate reductase from Shewanella pealeana (strain ATCC 700345 / ANG-SQ1).